The chain runs to 66 residues: Clarkitoxin-I-Mdum (66 aa).

Intrachain disulfides connect C3/C24, C17/C42, C46/C59, and C60/C65.

As to expression, expressed by the venom gland.

The protein localises to the secreted. In terms of biological role, no toxicity is observed upon intravenous or intracerebroventricular injection into mice. Has no cytotoxic activity towards C2C12 cells at 100 ug/ml. This is Clarkitoxin-I-Mdum from Micrurus dumerilii (Coral snake).